The sequence spans 346 residues: Aspartate-semialdehyde dehydrogenase (346 aa).

NADP(+) is bound by residues 12–15 and 40–41; these read SGAV and RS. A phosphate-binding site is contributed by arginine 101. Catalysis depends on cysteine 131, which acts as the Acyl-thioester intermediate. Glutamine 158 contacts substrate. 161–162 provides a ligand contact to NADP(+); the sequence is SG. Lysine 225 is a binding site for phosphate. Residue arginine 246 coordinates substrate. Histidine 253 acts as the Proton acceptor in catalysis. Glutamine 326 contributes to the NADP(+) binding site.

It belongs to the aspartate-semialdehyde dehydrogenase family. Homodimer.

The catalysed reaction is L-aspartate 4-semialdehyde + phosphate + NADP(+) = 4-phospho-L-aspartate + NADPH + H(+). It functions in the pathway amino-acid biosynthesis; L-lysine biosynthesis via DAP pathway; (S)-tetrahydrodipicolinate from L-aspartate: step 2/4. The protein operates within amino-acid biosynthesis; L-methionine biosynthesis via de novo pathway; L-homoserine from L-aspartate: step 2/3. It participates in amino-acid biosynthesis; L-threonine biosynthesis; L-threonine from L-aspartate: step 2/5. Catalyzes the NADPH-dependent formation of L-aspartate-semialdehyde (L-ASA) by the reductive dephosphorylation of L-aspartyl-4-phosphate. This Helicobacter pylori (strain J99 / ATCC 700824) (Campylobacter pylori J99) protein is Aspartate-semialdehyde dehydrogenase.